A 422-amino-acid polypeptide reads, in one-letter code: Enolase (422 aa).

Gln-162 lines the (2R)-2-phosphoglycerate pocket. Glu-204 serves as the catalytic Proton donor. Positions 241, 284, and 311 each coordinate Mg(2+). (2R)-2-phosphoglycerate is bound by residues Lys-336, Arg-365, Ser-366, and Lys-387. Lys-336 acts as the Proton acceptor in catalysis.

It belongs to the enolase family. Requires Mg(2+) as cofactor.

It localises to the cytoplasm. The protein resides in the secreted. It is found in the cell surface. It carries out the reaction (2R)-2-phosphoglycerate = phosphoenolpyruvate + H2O. It functions in the pathway carbohydrate degradation; glycolysis; pyruvate from D-glyceraldehyde 3-phosphate: step 4/5. In terms of biological role, catalyzes the reversible conversion of 2-phosphoglycerate (2-PG) into phosphoenolpyruvate (PEP). It is essential for the degradation of carbohydrates via glycolysis. The chain is Enolase from Thermus thermophilus (strain ATCC 27634 / DSM 579 / HB8).